Here is a 261-residue protein sequence, read N- to C-terminus: GTP cyclohydrolase FolE2 (261 aa).

It belongs to the GTP cyclohydrolase IV family.

It catalyses the reaction GTP + H2O = 7,8-dihydroneopterin 3'-triphosphate + formate + H(+). It participates in cofactor biosynthesis; 7,8-dihydroneopterin triphosphate biosynthesis; 7,8-dihydroneopterin triphosphate from GTP: step 1/1. Its function is as follows. Converts GTP to 7,8-dihydroneopterin triphosphate. In Fervidobacterium nodosum (strain ATCC 35602 / DSM 5306 / Rt17-B1), this protein is GTP cyclohydrolase FolE2.